The chain runs to 414 residues: Peptidoglycan beta-N-acetylmuramidase NamZ (414 aa).

An N-terminal signal peptide occupies residues 1–23 (MRKTIFAFLTGLMMFGTITAASA).

Belongs to the glycoside hydrolase 171 family. Homodimer in solution.

The protein resides in the secreted. The enzyme catalyses Hydrolysis of terminal, non-reducing N-acetylmuramic residues.. Catalyzes the exo-lytic cleavage of beta-1,4-N-acetylmuramate (beta-1,4-MurNAc) from the non-reducing ends of peptidoglycan chains. Specifically hydrolyzes the natural, peptidoglycan-derived disaccharide MurNAc-GlcNAc and the artificial substrate para-nitrophenyl beta-N-acetylmuramic acid (pNP-MurNAc). Requires a MurNAc entity at the non-reducing end, and cannot cleave GlcNAc-MurNAc. Probably plays a role in cell wall turnover and recycling. This Bacillus subtilis (strain 168) protein is Peptidoglycan beta-N-acetylmuramidase NamZ.